Consider the following 357-residue polypeptide: Guanine nucleotide-binding protein alpha-1 subunit (357 aa).

Glycine 2 is lipidated: N-myristoyl glycine. Cysteine 4 carries the S-palmitoyl cysteine lipid modification. Positions 32–357 (NIIKLLLLGA…STKLKGCGLY (326 aa)) constitute a G-alpha domain. The segment at 35-48 (KLLLLGAGESGKST) is G1 motif. GTP-binding residues include glutamate 43, serine 44, glycine 45, lysine 46, serine 47, threonine 48, aspartate 151, leucine 176, threonine 182, glycine 204, asparagine 270, lysine 271, aspartate 273, and alanine 329. Serine 47 provides a ligand contact to Mg(2+). Residues 174–182 (DILHTRVPT) form a G2 motif region. Position 182 (threonine 182) interacts with Mg(2+). Positions 197 to 206 (FRVFDVGGQR) are G3 motif. The tract at residues 266-273 (ILFLNKID) is G4 motif. The interval 327 to 332 (TCATDT) is G5 motif.

This sequence belongs to the G-alpha family. As to quaternary structure, g proteins are composed of 3 units; alpha, beta and gamma. The alpha chain contains the guanine nucleotide binding site. Mg(2+) serves as cofactor.

Functionally, guanine nucleotide-binding proteins (G proteins) are involved as modulators or transducers in various transmembrane signaling systems. In Caenorhabditis elegans, this protein is Guanine nucleotide-binding protein alpha-1 subunit (gpa-1).